A 432-amino-acid polypeptide reads, in one-letter code: Luc7-like protein 3 (432 aa).

Residue methionine 1 is modified to N-acetylmethionine. Serine 3, serine 110, and serine 115 each carry phosphoserine. A coiled-coil region spans residues 124–181 (KNEEKIQVLTDKIDVLLQQIEELGSEGKVEEAQGMMKLVEQLKEERELLRSTTSTIES). Lysine 231 carries the post-translational modification N6-acetyllysine. Residues 234–287 (LRKRTEEPDRDERLKKEKQEREEREKEREREREERERKRRREEEEREKERARDR) show a composition bias toward basic and acidic residues. The interval 234–432 (LRKRTEEPDR…IKSEGDTQSN (199 aa)) is disordered. A compositionally biased stretch (basic residues) spans 288–301 (ERRKRSRSRSRHSS). Over residues 302–311 (RTSDRRCSRS) the composition is skewed to basic and acidic residues. The segment covering 312–367 (RDHKRSRSRERRRSRSRDRRRSRSHDRSERKHRSRSRDRRRSKSRDRKSYKHRSKS) has biased composition (basic residues). A compositionally biased stretch (basic and acidic residues) spans 368 to 414 (RDREQDRKSKEKEKRGSDDKKSSVKSSSREKQSEDTNTESKESDTKN). Serine 420 carries the post-translational modification Phosphoserine. Residues 421 to 432 (EDIKSEGDTQSN) show a composition bias toward basic and acidic residues. Lysine 424 is covalently cross-linked (Glycyl lysine isopeptide (Lys-Gly) (interchain with G-Cter in SUMO1); alternate). Lysine 424 participates in a covalent cross-link: Glycyl lysine isopeptide (Lys-Gly) (interchain with G-Cter in SUMO2); alternate. Residues serine 425 and serine 431 each carry the phosphoserine modification.

The protein belongs to the Luc7 family. As to quaternary structure, may interact with SFRS1 and form homodimers. Interacts with JMJD6. Interacts with RBM25. Interacts with RSRC1 (via Arg/Ser-rich domain). Interacts with RRP1B.

It localises to the nucleus speckle. In terms of biological role, binds cAMP regulatory element DNA sequence. May play a role in RNA splicing. This Bos taurus (Bovine) protein is Luc7-like protein 3 (LUC7L3).